We begin with the raw amino-acid sequence, 1406 residues long: DNA-directed RNA polymerase subunit beta' (1406 aa).

Cys70, Cys72, Cys85, and Cys88 together coordinate Zn(2+). Mg(2+)-binding residues include Asp460, Asp462, and Asp464. Residues Cys814, Cys888, Cys895, and Cys898 each coordinate Zn(2+).

This sequence belongs to the RNA polymerase beta' chain family. The RNAP catalytic core consists of 2 alpha, 1 beta, 1 beta' and 1 omega subunit. When a sigma factor is associated with the core the holoenzyme is formed, which can initiate transcription. Requires Mg(2+) as cofactor. Zn(2+) is required as a cofactor.

It carries out the reaction RNA(n) + a ribonucleoside 5'-triphosphate = RNA(n+1) + diphosphate. Its function is as follows. DNA-dependent RNA polymerase catalyzes the transcription of DNA into RNA using the four ribonucleoside triphosphates as substrates. The protein is DNA-directed RNA polymerase subunit beta' of Photorhabdus laumondii subsp. laumondii (strain DSM 15139 / CIP 105565 / TT01) (Photorhabdus luminescens subsp. laumondii).